A 141-amino-acid polypeptide reads, in one-letter code: Hemoglobin subunit alpha (141 aa).

The Globin domain maps to 1-141 (VLSAADKTNV…VSTVLTSKYR (141 aa)). Serine 3 carries the post-translational modification Phosphoserine. The residue at position 7 (lysine 7) is an N6-succinyllysine. Threonine 8 carries the post-translational modification Phosphothreonine. Lysine 11 is modified (N6-succinyllysine). The residue at position 16 (lysine 16) is an N6-acetyllysine; alternate. At lysine 16 the chain carries N6-succinyllysine; alternate. Tyrosine 24 carries the phosphotyrosine modification. Phosphoserine is present on serine 35. N6-succinyllysine is present on lysine 40. A Phosphoserine modification is found at serine 49. Histidine 58 is a binding site for O2. Heme b is bound at residue histidine 87. Position 102 is a phosphoserine (serine 102). At threonine 108 the chain carries Phosphothreonine. Serine 124 and serine 131 each carry phosphoserine. Residues threonine 134 and threonine 137 each carry the phosphothreonine modification. Residue serine 138 is modified to Phosphoserine.

It belongs to the globin family. Heterotetramer of two alpha chains and two beta chains. As to expression, red blood cells.

Involved in oxygen transport from the lung to the various peripheral tissues. This chain is Hemoglobin subunit alpha, found in Tamiasciurus hudsonicus (American red squirrel).